A 281-amino-acid polypeptide reads, in one-letter code: Leukocyte antigen CD37 (281 aa).

Residues 1–17 are Cytoplasmic-facing; it reads MSAQESCLSLIKYFLFV. Residues 18 to 38 form a helical membrane-spanning segment; it reads FNLFFFVLGGLIFCFGTWILI. Residues 39-59 are Extracellular-facing; it reads DKTSFVSFVGLSFVPLQTWSK. The chain crosses the membrane as a helical span at residues 60–74; sequence VLAVSGVLTMALALL. Residues 75–85 are Cytoplasmic-facing; the sequence is GCVGALKELRC. Residues 86–111 traverse the membrane as a helical segment; the sequence is LLGLYFGMLLLLFATQITLGILISTQ. The Extracellular segment spans residues 112-241; the sequence is RVRLERRVQE…QSLQKWLHNN (130 aa). N-linked (GlcNAc...) asparagine glycosylation is found at Asn170, Asn183, and Asn188. A helical membrane pass occupies residues 242–266; that stretch reads IISIVGICLGVGLLELGFMTLSIFL. At 267 to 281 the chain is on the cytoplasmic side; it reads CRNLDHVYDRLARYR.

This sequence belongs to the tetraspanin (TM4SF) family. Interacts with SCIMP. Interacts with SOCS3. Interacts with DECTIN1/CLEC7A. In terms of processing, tyrosine phosphorylated; leading to activation of downstream signaling pathways.

It localises to the cell membrane. Structural component of specialized membrane microdomains known as tetraspanin-enriched microdomains (TERMs), which act as platforms for receptor clustering and signaling. Participates thereby in diverse biological functions such as cell signal transduction, adhesion, migration and protein trafficking. Upon ligand binding, two signaling pathways are activated, one acting through phosphorylation by LYN leading to cell death or a survival pathway with activation of GSK3B. Plays an essential role for clustering of integrin ITGA4/ITGB1 and promotes its mobility in the plasma membrane of B-cells. In turn, participates in ITGA4/ITGB1 integrin-mediated antiapoptotic signaling through AKT. Also plays a role in the migration of dendritic cells and neutrophils to draining lymph nodes, as well as in their integrin-mediated adhesion. Negatively regulates IL-6 responses through direct interaction with SOCS3 thereby preventing constitutive IL-6 signaling. Alternatively, inhibition of IL-6 signaling can also occur via interaction and stabilization of DECTIN1/CLEC7A at the cell membrane to inhibit its ability to promote the production of IL-6. This Mus musculus (Mouse) protein is Leukocyte antigen CD37 (Cd37).